A 215-amino-acid polypeptide reads, in one-letter code: WAT1-related protein At3g28060 (215 aa).

Transmembrane regions (helical) follow at residues 48-68 (IIIG…AVAY), 82-102 (FALA…VSLF), 117-137 (IMLI…VVES), 146-166 (VFLA…GAIF), and 176-196 (VIGG…FHIA). The EamA domain occupies 65-186 (AVAYIVQTHI…IGGTLISIGF (122 aa)).

It belongs to the drug/metabolite transporter (DMT) superfamily. Plant drug/metabolite exporter (P-DME) (TC 2.A.7.4) family.

It is found in the membrane. This is WAT1-related protein At3g28060 from Arabidopsis thaliana (Mouse-ear cress).